An 846-amino-acid polypeptide reads, in one-letter code: Outer membrane channel protein CpnT (846 aa).

Residues 1 to 443 (MAPLAVDPAA…AGVRGLKERL (443 aa)) are NTD. The segment at 442-630 (RLEPTTPHLE…SGSEPPGLHA (189 aa)) is disordered. Composition is skewed to pro residues over residues 450–466 (LEPP…PPRI) and 475–504 (APAP…PPVD). 2 stretches are compositionally biased toward low complexity: residues 508 to 517 (EPVAPSSASA) and 562 to 586 (APAT…HSTP). The tract at residues 651 to 846 (RLSDEAVDPQ…ELIRRGVLRQ (196 aa)) is TNT. One can recognise a TNT domain in the interval 751 to 846 (YGPQLDRIGG…ELIRRGVLRQ (96 aa)). The active site involves arginine 757. Arginine 780 contributes to the NAD(+) binding site. The active site involves glutamine 822.

In terms of assembly, interacts with the immunity factor for TNT (IFT) homolog. Post-translationally, the C-terminal domain (TNT) is probably cleaved.

It is found in the cell outer membrane. It localises to the secreted. Its subcellular location is the cell surface. The catalysed reaction is NAD(+) + H2O = ADP-D-ribose + nicotinamide + H(+). With respect to regulation, glycohydrolase activity is completely inhibited by interaction with the immunity factor for TNT (IFT) homolog. This inhibition protects M.bovis from self-poisoning. The N-terminal domain (NTD) forms an outer membrane channel and is used for uptake of nutrients across the outer membrane. Also confers susceptibility to structurally different antibiotics and antituberculosis drugs, and to toxic immune factors such as nitric oxide (NO). The C-terminal domain (TNT) is dispensable for normal growth in macrophages. This is Outer membrane channel protein CpnT from Mycobacterium bovis (strain BCG / Pasteur 1173P2).